A 661-amino-acid polypeptide reads, in one-letter code: Serine/threonine-protein phosphatase rdgC (661 aa).

The IQ domain maps to 7 to 32; it reads RAAIFIQKWYRRHQARREMQRRCNWQ. A catalytic region spans residues 105 to 413; the sequence is IDLLIDVFRK…HFVQYISAAS (309 aa). Residues Asp158, His160, Asp187, and Asn219 each coordinate Mn(2+). His220 acts as the Proton donor in catalysis. His271 and His360 together coordinate Mn(2+). EF-hand domains lie at 441 to 476, 526 to 561, and 566 to 601; these read DHRD…VTKL, ANKA…LVAH, and YSKA…SDLH. Ca(2+) is bound by residues Asp539, Asp541, Ser543, Glu545, Glu550, Asp579, Asn581, Asp583, Lys585, and Glu590. Positions 606–625 are disordered; it reads QDENIRRRSTGRPSVAKTAT.

This sequence belongs to the PPP phosphatase family. The cofactor is Mn(2+). Expressed in the visual system of the fly, as well as in the mushroom bodies of the central brain.

The catalysed reaction is O-phospho-L-seryl-[protein] + H2O = L-seryl-[protein] + phosphate. It carries out the reaction O-phospho-L-threonyl-[protein] + H2O = L-threonyl-[protein] + phosphate. Phosphatase required to prevent light-induced retinal degeneration. The polypeptide is Serine/threonine-protein phosphatase rdgC (rdgC) (Drosophila melanogaster (Fruit fly)).